Here is a 129-residue protein sequence, read N- to C-terminus: Cytochrome c' (129 aa).

Heme c-binding residues include arginine 12, glutamine 13, threonine 69, glutamate 70, cysteine 119, cysteine 122, and histidine 123.

Post-translationally, binds 1 heme c group covalently per subunit.

Cytochrome c' is the most widely occurring bacterial c-type cytochrome. Cytochromes c' are high-spin proteins and the heme has no sixth ligand. Their exact function is not known. This chain is Cytochrome c', found in Rubrivivax gelatinosus (Rhodocyclus gelatinosus).